The primary structure comprises 105 residues: Large ribosomal subunit protein uL24 (105 aa).

The tract at residues 67-105 (HISNLNPVDPKTGKATRIGRRKSSEGTLVRYSKKSGEEI) is disordered.

It belongs to the universal ribosomal protein uL24 family. In terms of assembly, part of the 50S ribosomal subunit.

Functionally, one of two assembly initiator proteins, it binds directly to the 5'-end of the 23S rRNA, where it nucleates assembly of the 50S subunit. One of the proteins that surrounds the polypeptide exit tunnel on the outside of the subunit. The sequence is that of Large ribosomal subunit protein uL24 from Bacteroides thetaiotaomicron (strain ATCC 29148 / DSM 2079 / JCM 5827 / CCUG 10774 / NCTC 10582 / VPI-5482 / E50).